The sequence spans 225 residues: Putative membrane protease YugP (225 aa).

Position 95 (His-95) interacts with Zn(2+). The active site involves Glu-96. The Zn(2+) site is built by His-99 and His-103. The next 3 membrane-spanning stretches (helical) occupy residues 116–138, 140–162, and 192–212; these read IFPVVNFASGVAPLLFLGGMLLG, LNLIGLGIILFSAAVFFQLITLP, and VLSAAALTYVAAALVSLFELL.

It is found in the cell membrane. In Bacillus subtilis (strain 168), this protein is Putative membrane protease YugP (yugP).